The following is a 448-amino-acid chain: tRNA(Ile)-lysidine synthase (448 aa).

Residue 25–30 participates in ATP binding; sequence SGGSDS.

The protein belongs to the tRNA(Ile)-lysidine synthase family.

It is found in the cytoplasm. The enzyme catalyses cytidine(34) in tRNA(Ile2) + L-lysine + ATP = lysidine(34) in tRNA(Ile2) + AMP + diphosphate + H(+). Ligates lysine onto the cytidine present at position 34 of the AUA codon-specific tRNA(Ile) that contains the anticodon CAU, in an ATP-dependent manner. Cytidine is converted to lysidine, thus changing the amino acid specificity of the tRNA from methionine to isoleucine. This is tRNA(Ile)-lysidine synthase from Brucella canis (strain ATCC 23365 / NCTC 10854 / RM-666).